The primary structure comprises 367 residues: UDP-D-xylose:L-fucose alpha-1,3-D-xylosyltransferase (367 aa).

Polar residues predominate over residues 1 to 10 (MAQKQQTLHQ). The interval 1–21 (MAQKQQTLHQQRPFSSSPRSY) is disordered. The Cytoplasmic segment spans residues 1–35 (MAQKQQTLHQQRPFSSSPRSYSSISNRPIFLLSRN). A compositionally biased stretch (low complexity) spans 12–21 (RPFSSSPRSY). A helical; Signal-anchor for type II membrane protein transmembrane segment spans residues 36–56 (GLLLVLLALFLLLGVFLPWPG). Residues 57–367 (SPLLLFPNKV…ALESPLGKLQ (311 aa)) lie on the Lumenal side of the membrane. N-linked (GlcNAc...) asparagine glycans are attached at residues N85, N98, and N173. A DXD motif motif is present at residues 196–198 (DVD). 2 N-linked (GlcNAc...) asparagine glycosylation sites follow: N228 and N292.

It belongs to the glycosyltransferase 77 family. Mn(2+) is required as a cofactor. Requires Mg(2+) as cofactor. Glycosylated. As to expression, expressed in roots, rosette leaves, stems and flowers.

It localises to the golgi apparatus membrane. Its function is as follows. Catalyzes the transfer of D-xylose from UDP-alpha-D-xylose onto L-fucose. Probably involved in the biosynthesis of rhamnogalacturonan II (RG-II) through xylosylation of the internal fucose moiety of the A-chain of RG-II, a structurally complex pectic polysaccharide of the primary cell wall. RG-II is essential for the cell wall integrity of rapidly growing tissues such as roots and pollen tube growth and elongation. This is UDP-D-xylose:L-fucose alpha-1,3-D-xylosyltransferase from Arabidopsis thaliana (Mouse-ear cress).